A 617-amino-acid polypeptide reads, in one-letter code: ATP-dependent zinc metalloprotease FtsH (617 aa).

Residues 1–7 (MKIPFDR) are Cytoplasmic-facing. The helical transmembrane segment at 8–28 (WLGWPTLLLLLLGLWLLGSSL) threads the bilayer. At 29 to 102 (RDQRTVEAVP…VSYRRVRESN (74 aa)) the chain is on the periplasmic side. The chain crosses the membrane as a helical span at residues 103–123 (WLSQLLSWMAGPLLLLGFWYF). Over 124–617 (MSRRIDGQQG…GRPAAIRQVA (494 aa)) the chain is Cytoplasmic. An ATP-binding site is contributed by 198–205 (GPTGTGKT). His421 contacts Zn(2+). Residue Glu422 is part of the active site. Positions 425 and 498 each coordinate Zn(2+).

This sequence in the central section; belongs to the AAA ATPase family. In the C-terminal section; belongs to the peptidase M41 family. As to quaternary structure, homohexamer. The cofactor is Zn(2+).

It is found in the cell inner membrane. In terms of biological role, acts as a processive, ATP-dependent zinc metallopeptidase for both cytoplasmic and membrane proteins. Plays a role in the quality control of integral membrane proteins. This Methylibium petroleiphilum (strain ATCC BAA-1232 / LMG 22953 / PM1) protein is ATP-dependent zinc metalloprotease FtsH.